Consider the following 392-residue polypeptide: 23S rRNA (uracil(747)-C(5))-methyltransferase RlmC (392 aa).

4 residues coordinate [4Fe-4S] cluster: Cys-4, Cys-12, Cys-15, and Cys-93. S-adenosyl-L-methionine is bound by residues Gln-218, Phe-247, Glu-275, and Asn-321. Cys-348 serves as the catalytic Nucleophile.

This sequence belongs to the class I-like SAM-binding methyltransferase superfamily. RNA M5U methyltransferase family. RlmC subfamily.

It catalyses the reaction uridine(747) in 23S rRNA + S-adenosyl-L-methionine = 5-methyluridine(747) in 23S rRNA + S-adenosyl-L-homocysteine + H(+). Its function is as follows. Catalyzes the formation of 5-methyl-uridine at position 747 (m5U747) in 23S rRNA. The polypeptide is 23S rRNA (uracil(747)-C(5))-methyltransferase RlmC (Haemophilus influenzae (strain PittGG)).